We begin with the raw amino-acid sequence, 133 residues long: Holo-[acyl-carrier-protein] synthase (133 aa).

Mg(2+)-binding residues include Asp-8 and Glu-57.

It belongs to the P-Pant transferase superfamily. AcpS family. Requires Mg(2+) as cofactor.

It localises to the cytoplasm. The enzyme catalyses apo-[ACP] + CoA = holo-[ACP] + adenosine 3',5'-bisphosphate + H(+). Functionally, transfers the 4'-phosphopantetheine moiety from coenzyme A to a Ser of acyl-carrier-protein. In Chelativorans sp. (strain BNC1), this protein is Holo-[acyl-carrier-protein] synthase.